Here is a 456-residue protein sequence, read N- to C-terminus: tRNA modification GTPase MnmE (456 aa).

(6S)-5-formyl-5,6,7,8-tetrahydrofolate contacts are provided by arginine 25, glutamate 82, and lysine 121. The TrmE-type G domain occupies 217-379 (GIKVVIIGKP…LLDEIVKIAG (163 aa)). Asparagine 227 is a binding site for K(+). Residues 227 to 232 (NAGKSS), 246 to 252 (TDIAGTT), and 271 to 274 (DTAG) each bind GTP. Serine 231 is a binding site for Mg(2+). Threonine 246, isoleucine 248, and threonine 251 together coordinate K(+). Residue threonine 252 participates in Mg(2+) binding. Lysine 456 serves as a coordination point for (6S)-5-formyl-5,6,7,8-tetrahydrofolate.

This sequence belongs to the TRAFAC class TrmE-Era-EngA-EngB-Septin-like GTPase superfamily. TrmE GTPase family. Homodimer. Heterotetramer of two MnmE and two MnmG subunits. K(+) is required as a cofactor.

Its subcellular location is the cytoplasm. Its function is as follows. Exhibits a very high intrinsic GTPase hydrolysis rate. Involved in the addition of a carboxymethylaminomethyl (cmnm) group at the wobble position (U34) of certain tRNAs, forming tRNA-cmnm(5)s(2)U34. This Endomicrobium trichonymphae protein is tRNA modification GTPase MnmE.